The sequence spans 357 residues: DNA integrity scanning protein DisA (357 aa).

The 141-residue stretch at 8–148 folds into the DAC domain; sequence PQELIEKIKL…NYKYVVNQVD (141 aa). 5 residues coordinate 3',3'-c-di-AMP: Gly-76, Leu-94, Thr-107, Thr-111, and Arg-128.

This sequence belongs to the DisA family. Homooctamer. The cofactor is Mg(2+).

It carries out the reaction 2 ATP = 3',3'-c-di-AMP + 2 diphosphate. Its activity is regulated as follows. Inhibited by 3'-dATP. Participates in a DNA-damage check-point. DisA forms globular foci that rapidly scan along the chromosomes searching for lesions. Its function is as follows. Has diadenylate cyclase activity, catalyzing the condensation of 2 ATP molecules into cyclic di-AMP (c-di-AMP). c-di-AMP likely acts as a signaling molecule that may couple DNA integrity with a cellular process. This rate-limiting step is the accessibility of the active site; mutating the possible exit tunnel (residues 128-130) increases product 2-fold despite Arg-130 being important for ATP-binding. Does not convert GTP to c-di-GMP. The protein is DNA integrity scanning protein DisA of Thermotoga maritima (strain ATCC 43589 / DSM 3109 / JCM 10099 / NBRC 100826 / MSB8).